The following is a 280-amino-acid chain: ITEIKADKTTAVANGKDAVTYTVKVMKDGKPLSGEEVTFTTTLGTLSKSTEKTNTNGYRKVSLTSANQGKSLVSASVTMPQLMLKLLEVEFFTQLTIDNGNVEIVGTGAKGKLPNVWLQYGQVNLKANGGNGKYTWYSANPAIASVDPSSGQVTLKDKGETTITVVSGDKQTAIYTIAMPNSIVSVNSSGRVDYNTANNICKNIKGSLPSSIKELKDLYDDWGAANKYQHYSQESITAWTLQTSENKVQGVASTYDLVRKNPLIDKVDIAGNYAYAVCVK.

A Big-1 domain is found at 1–92 (ITEIKADKTT…MLKLLEVEFF (92 aa)). A BIG2 domain is found at 127–173 (ANGGNGKYTWYSANPAIASVDPSSGQVTLKDKGETTITVVSGDKQTA). Residues Cys201 and Cys278 are joined by a disulfide bond.

The protein belongs to the intimin/invasin family.

It is found in the cell outer membrane. Functionally, an inverse autotransporter. The protein is Intimin (eaeA) of Hafnia alvei.